The following is a 66-amino-acid chain: uncharacterized protein (66 aa).

The tract at residues 1–21 (MPGGDRTGPWGQGPRTGRRAG) is disordered.

This is an uncharacterized protein from Archaeoglobus fulgidus (strain ATCC 49558 / DSM 4304 / JCM 9628 / NBRC 100126 / VC-16).